A 459-amino-acid chain; its full sequence is Ribulose bisphosphate carboxylase large chain (459 aa).

Lys-4 is modified (N6,N6,N6-trimethyllysine). Substrate is bound by residues Asn-113 and Thr-163. Lys-165 (proton acceptor) is an active-site residue. Lys-167 serves as a coordination point for substrate. The Mg(2+) site is built by Lys-191, Asp-193, and Glu-194. The residue at position 191 (Lys-191) is an N6-carboxylysine. His-284 functions as the Proton acceptor in the catalytic mechanism. Residues Arg-285, His-317, and Ser-369 each contribute to the substrate site.

The protein belongs to the RuBisCO large chain family. Type I subfamily. Heterohexadecamer of 8 large chains and 8 small chains; disulfide-linked. The disulfide link is formed within the large subunit homodimers. Requires Mg(2+) as cofactor. The disulfide bond which can form in the large chain dimeric partners within the hexadecamer appears to be associated with oxidative stress and protein turnover.

It is found in the plastid. The protein resides in the chloroplast. The enzyme catalyses 2 (2R)-3-phosphoglycerate + 2 H(+) = D-ribulose 1,5-bisphosphate + CO2 + H2O. It carries out the reaction D-ribulose 1,5-bisphosphate + O2 = 2-phosphoglycolate + (2R)-3-phosphoglycerate + 2 H(+). Functionally, ruBisCO catalyzes two reactions: the carboxylation of D-ribulose 1,5-bisphosphate, the primary event in carbon dioxide fixation, as well as the oxidative fragmentation of the pentose substrate in the photorespiration process. Both reactions occur simultaneously and in competition at the same active site. This chain is Ribulose bisphosphate carboxylase large chain, found in Garrya elliptica (Wavyleaf silktassel).